The following is a 428-amino-acid chain: Serine--tRNA ligase (428 aa).

235–237 (TAE) is an L-serine binding site. Residue 266 to 268 (RSE) coordinates ATP. Glu-289 is a binding site for L-serine. 353-356 (EISS) provides a ligand contact to ATP. Position 389 (Ser-389) interacts with L-serine.

It belongs to the class-II aminoacyl-tRNA synthetase family. Type-1 seryl-tRNA synthetase subfamily. As to quaternary structure, homodimer. The tRNA molecule binds across the dimer.

The protein resides in the cytoplasm. The catalysed reaction is tRNA(Ser) + L-serine + ATP = L-seryl-tRNA(Ser) + AMP + diphosphate + H(+). It catalyses the reaction tRNA(Sec) + L-serine + ATP = L-seryl-tRNA(Sec) + AMP + diphosphate + H(+). It functions in the pathway aminoacyl-tRNA biosynthesis; selenocysteinyl-tRNA(Sec) biosynthesis; L-seryl-tRNA(Sec) from L-serine and tRNA(Sec): step 1/1. Functionally, catalyzes the attachment of serine to tRNA(Ser). Is also able to aminoacylate tRNA(Sec) with serine, to form the misacylated tRNA L-seryl-tRNA(Sec), which will be further converted into selenocysteinyl-tRNA(Sec). The protein is Serine--tRNA ligase of Shewanella piezotolerans (strain WP3 / JCM 13877).